A 184-amino-acid chain; its full sequence is Dirigent protein 14 (184 aa).

The signal sequence occupies residues 1 to 20; the sequence is MANQIYLFSLICLSVLLCQS. A disulfide bridge connects residues C36 and C182. N-linked (GlcNAc...) asparagine glycosylation is found at N55 and N119.

It belongs to the plant dirigent protein family. In terms of assembly, homodimer.

Its subcellular location is the secreted. It is found in the extracellular space. The protein localises to the apoplast. Dirigent proteins impart stereoselectivity on the phenoxy radical-coupling reaction, yielding optically active lignans from two molecules of coniferyl alcohol in the biosynthesis of lignans, flavonolignans, and alkaloids and thus plays a central role in plant secondary metabolism. This Arabidopsis thaliana (Mouse-ear cress) protein is Dirigent protein 14 (DIR14).